We begin with the raw amino-acid sequence, 253 residues long: Glucosamine-6-phosphate deaminase (253 aa).

The Proton acceptor; for enolization step role is filled by Asp-67. Asn-136 functions as the For ring-opening step in the catalytic mechanism. Residue His-138 is the Proton acceptor; for ring-opening step of the active site. The active-site For ring-opening step is the Glu-143.

This sequence belongs to the glucosamine/galactosamine-6-phosphate isomerase family. NagB subfamily.

The enzyme catalyses alpha-D-glucosamine 6-phosphate + H2O = beta-D-fructose 6-phosphate + NH4(+). It functions in the pathway amino-sugar metabolism; N-acetylneuraminate degradation; D-fructose 6-phosphate from N-acetylneuraminate: step 5/5. Its function is as follows. Catalyzes the reversible isomerization-deamination of glucosamine 6-phosphate (GlcN6P) to form fructose 6-phosphate (Fru6P) and ammonium ion. The chain is Glucosamine-6-phosphate deaminase from Thermoanaerobacter pseudethanolicus (strain ATCC 33223 / 39E) (Clostridium thermohydrosulfuricum).